The sequence spans 434 residues: ATP-dependent RNA helicase SUB2 (434 aa).

Acidic residues predominate over residues 1–16 (MSGEEDLIDYSDDELN). The segment at 1–32 (MSGEEDLIDYSDDELNNETTAPASNGKKGDAA) is disordered. The short motif at 50-78 (TGFRDFLLKPELLRAIADCGFEHPSEVQQ) is the Q motif element. The Helicase ATP-binding domain maps to 81–256 (IPQAMLGGDI…RKFMQNPTEH (176 aa)). 94–101 (AKSGLGKT) contacts ATP. Positions 203 to 206 (DECD) match the DEAD box motif. Residues 268–429 (GLQQYYIPLE…EFPKEGIDAS (162 aa)) enclose the Helicase C-terminal domain.

Belongs to the DEAD box helicase family. DECD subfamily.

It localises to the nucleus. The enzyme catalyses ATP + H2O = ADP + phosphate + H(+). ATP-binding RNA helicase involved in transcription elongation and required for the export of mRNA out of the nucleus. SUB2 also plays a role in pre-mRNA splicing and spliceosome assembly. May be involved in rDNA and telomeric silencing, and maintenance of genome integrity. The protein is ATP-dependent RNA helicase SUB2 (SUB2) of Chaetomium globosum (strain ATCC 6205 / CBS 148.51 / DSM 1962 / NBRC 6347 / NRRL 1970) (Soil fungus).